Here is a 205-residue protein sequence, read N- to C-terminus: Peptidyl-tRNA hydrolase (205 aa).

Y14 lines the tRNA pocket. The active-site Proton acceptor is H19. The tRNA site is built by Y68, N70, and N116.

The protein belongs to the PTH family. As to quaternary structure, monomer.

The protein resides in the cytoplasm. It catalyses the reaction an N-acyl-L-alpha-aminoacyl-tRNA + H2O = an N-acyl-L-amino acid + a tRNA + H(+). Its function is as follows. Hydrolyzes ribosome-free peptidyl-tRNAs (with 1 or more amino acids incorporated), which drop off the ribosome during protein synthesis, or as a result of ribosome stalling. Functionally, catalyzes the release of premature peptidyl moieties from peptidyl-tRNA molecules trapped in stalled 50S ribosomal subunits, and thus maintains levels of free tRNAs and 50S ribosomes. The polypeptide is Peptidyl-tRNA hydrolase (Caulobacter vibrioides (strain ATCC 19089 / CIP 103742 / CB 15) (Caulobacter crescentus)).